The following is a 1387-amino-acid chain: DNA-directed RNA polymerase subunit beta'' (1387 aa).

The Zn(2+) site is built by Cys-220, Cys-291, Cys-298, and Cys-301.

It belongs to the RNA polymerase beta' chain family. RpoC2 subfamily. In terms of assembly, in plastids the minimal PEP RNA polymerase catalytic core is composed of four subunits: alpha, beta, beta', and beta''. When a (nuclear-encoded) sigma factor is associated with the core the holoenzyme is formed, which can initiate transcription. Zn(2+) serves as cofactor.

It localises to the plastid. The protein resides in the chloroplast. The enzyme catalyses RNA(n) + a ribonucleoside 5'-triphosphate = RNA(n+1) + diphosphate. In terms of biological role, DNA-dependent RNA polymerase catalyzes the transcription of DNA into RNA using the four ribonucleoside triphosphates as substrates. The sequence is that of DNA-directed RNA polymerase subunit beta'' from Carica papaya (Papaya).